Consider the following 39-residue polypeptide: Photosystem II reaction center protein X (39 aa).

The chain crosses the membrane as a helical span at residues 10 to 30 (SSLVWAAVIVVIPAAVALVLI).

The protein belongs to the PsbX family. Type 1 subfamily. In terms of assembly, PSII is composed of 1 copy each of membrane proteins PsbA, PsbB, PsbC, PsbD, PsbE, PsbF, PsbH, PsbI, PsbJ, PsbK, PsbL, PsbM, PsbT, PsbX, PsbY, Psb30/Ycf12, peripheral proteins PsbO, CyanoQ (PsbQ), PsbU, PsbV and a large number of cofactors. It forms dimeric complexes.

The protein localises to the cellular thylakoid membrane. Involved in the binding and/or turnover of quinones at the Q(B) site of photosystem II (PSII). PSII is a light-driven water plastoquinone oxidoreductase, using light energy to abstract electrons from H(2)O, generating a proton gradient subsequently used for ATP formation. In Prochlorococcus marinus (strain MIT 9303), this protein is Photosystem II reaction center protein X.